The chain runs to 145 residues: 3-dehydroquinate dehydratase (145 aa).

Y23 functions as the Proton acceptor in the catalytic mechanism. 3 residues coordinate substrate: N73, H79, and D86. H99 (proton donor) is an active-site residue. Substrate-binding positions include 100–101 (LS) and R110.

This sequence belongs to the type-II 3-dehydroquinase family. In terms of assembly, homododecamer.

The enzyme catalyses 3-dehydroquinate = 3-dehydroshikimate + H2O. The protein operates within metabolic intermediate biosynthesis; chorismate biosynthesis; chorismate from D-erythrose 4-phosphate and phosphoenolpyruvate: step 3/7. Catalyzes a trans-dehydration via an enolate intermediate. The polypeptide is 3-dehydroquinate dehydratase (Desulfitobacterium hafniense (strain Y51)).